The sequence spans 370 residues: Isopentenyl-diphosphate delta-isomerase (370 aa).

8–9 lines the substrate pocket; sequence RK. FMN contacts are provided by residues Thr-65, 66-68, Ser-99, and Asn-127; that span reads GMT. 99 to 101 lines the substrate pocket; the sequence is SQR. Gln-166 contacts substrate. Glu-167 serves as a coordination point for Mg(2+). FMN contacts are provided by residues Lys-198, Ser-223, Thr-228, 277-279, and 298-299; these read GMR and AL.

It belongs to the IPP isomerase type 2 family. In terms of assembly, homooctamer. Dimer of tetramers. FMN serves as cofactor. The cofactor is NADPH. It depends on Mg(2+) as a cofactor.

It is found in the cytoplasm. The catalysed reaction is isopentenyl diphosphate = dimethylallyl diphosphate. Its function is as follows. Involved in the biosynthesis of isoprenoids. Catalyzes the 1,3-allylic rearrangement of the homoallylic substrate isopentenyl (IPP) to its allylic isomer, dimethylallyl diphosphate (DMAPP). This chain is Isopentenyl-diphosphate delta-isomerase, found in Pyrococcus abyssi (strain GE5 / Orsay).